The sequence spans 304 residues: Uricase (304 aa).

Position 2 is an N-acetylalanine (alanine 2). An N6-acetyllysine; alternate mark is found at lysine 10 and lysine 23. 2 positions are modified to N6-succinyllysine; alternate: lysine 10 and lysine 23. Residue lysine 23 is the Charge relay system of the active site. 2 positions are modified to N6-acetyllysine: lysine 27 and lysine 36. Phosphoserine is present on residues serine 39 and serine 63. Catalysis depends on threonine 68, which acts as the Charge relay system. Urate is bound by residues threonine 68 and aspartate 69. An N6-acetyllysine mark is found at lysine 118, lysine 122, and lysine 164. Phenylalanine 170 is a binding site for urate. N6-acetyllysine is present on residues lysine 175 and lysine 185. Position 187 (arginine 187) interacts with urate. 2 positions are modified to N6-acetyllysine; alternate: lysine 221 and lysine 228. 2 positions are modified to N6-succinyllysine; alternate: lysine 221 and lysine 228. Residue serine 232 is modified to Phosphoserine. Urate is bound by residues valine 235, glutamine 236, and asparagine 262. The active-site Charge relay system is histidine 264. Lysine 278 carries the N6-acetyllysine modification. At tyrosine 289 the chain carries Phosphotyrosine. The short motif at 302–304 (SKL) is the Microbody targeting signal element.

It belongs to the uricase family.

It is found in the peroxisome. The catalysed reaction is urate + O2 + H2O = 5-hydroxyisourate + H2O2. It participates in purine metabolism; urate degradation; (S)-allantoin from urate: step 1/3. Catalyzes the oxidation of uric acid to 5-hydroxyisourate, which is further processed to form (S)-allantoin. The polypeptide is Uricase (UOX) (Canis lupus familiaris (Dog)).